The primary structure comprises 513 residues: MQLNSTEISELIKQRIAQFNVVSEAHNEGTIVSVSDGVIRIHGLAECMQGEMISLPGNRYAIALNLERDSVGAVVMGPYADLAEGMKVKCTGRILEVPVGRGLLGRVVNTLGAPIDGKGPLENDGFSAVEAIAPGVIERQSVDQPVQTGYKSVDAMIPIGRGQRELIIGDRQTGKTALAIDAIINQRDSGIKCVYVAIGQKASTISNVVRKLEEHGALANTIVVVATASESAALQYLAPYAGCAMGEYFRDRGEDALIIYDDLSKQAVAYRQISLLLRRPPGREAFPGDVFYLHSRLLERAARVNAEYVEAFTKGEVKGKTGSLTALPIIETQAGDVSAFVPTNVISITDGQIFLETNLFNAGIRPAVNPGISVSRVGGAAQTKIMKKLSGGIRTALAQYRELAAFSQFASDLDDATRKQLDHGQKVTELLKQKQYAPMSVAQQSLVLFAAERGYLADVELAKIGSFEAALLAYVDRDHAPLMQEINQSGGYNDEIEGKLKGILDSFKATQSW.

169–176 (GDRQTGKT) provides a ligand contact to ATP.

This sequence belongs to the ATPase alpha/beta chains family. F-type ATPases have 2 components, CF(1) - the catalytic core - and CF(0) - the membrane proton channel. CF(1) has five subunits: alpha(3), beta(3), gamma(1), delta(1), epsilon(1). CF(0) has three main subunits: a(1), b(2) and c(9-12). The alpha and beta chains form an alternating ring which encloses part of the gamma chain. CF(1) is attached to CF(0) by a central stalk formed by the gamma and epsilon chains, while a peripheral stalk is formed by the delta and b chains.

The protein localises to the cell inner membrane. It carries out the reaction ATP + H2O + 4 H(+)(in) = ADP + phosphate + 5 H(+)(out). In terms of biological role, produces ATP from ADP in the presence of a proton gradient across the membrane. The alpha chain is a regulatory subunit. The chain is ATP synthase subunit alpha from Klebsiella pneumoniae (strain 342).